Consider the following 476-residue polypeptide: RNA-splicing ligase RtcB homolog (476 aa).

Mn(2+) contacts are provided by aspartate 90, cysteine 93, histidine 198, histidine 230, and histidine 324. Residue asparagine 197 to glutamate 201 coordinates GMP. GMP is bound by residues histidine 324–asparagine 325, glycine 373–methionine 376, serine 380, histidine 399–glycine 402, and lysine 475. Catalysis depends on histidine 399, which acts as the GMP-histidine intermediate.

Belongs to the RtcB family. In terms of assembly, catalytic component of the tRNA-splicing ligase complex. The cofactor is Mn(2+).

It carries out the reaction a 3'-end 3'-phospho-ribonucleotide-RNA + a 5'-end dephospho-ribonucleoside-RNA + GTP = a ribonucleotidyl-ribonucleotide-RNA + GMP + diphosphate. The enzyme catalyses a 3'-end 2',3'-cyclophospho-ribonucleotide-RNA + a 5'-end dephospho-ribonucleoside-RNA + GTP + H2O = a ribonucleotidyl-ribonucleotide-RNA + GMP + diphosphate + H(+). In terms of biological role, catalytic subunit of the tRNA-splicing ligase complex that acts by directly joining spliced tRNA halves to mature-sized tRNAs by incorporating the precursor-derived splice junction phosphate into the mature tRNA as a canonical 3',5'-phosphodiester. May act as an RNA ligase with broad substrate specificity, and may function toward other RNAs. The protein is RNA-splicing ligase RtcB homolog of Chlamydomonas reinhardtii (Chlamydomonas smithii).